Reading from the N-terminus, the 252-residue chain is MHAEFRTDRGRIRHHNEDNGGVFENKDNQPIVIVADGMGGHRAGDVASEMAVRLLSDAWKETTALLTAEEIETWLRKTIQEVNKEIVLYAESEMDLNGMGTTLVAAIMAQSQVVIANVGDSRGYLLQNHVLRQLTEDHSLVHELLRTGEISKEDAMNHPRKNILLRALGVEGKVEVDTFVVPFQTSDTLLLCSDGLTNMVPETEMEEILKSKRTLSEKADVFITKANSYGGEDNITVLLVERDLTQKGRDAS.

Basic and acidic residues predominate over residues 1-18 (MHAEFRTDRGRIRHHNED). The tract at residues 1-23 (MHAEFRTDRGRIRHHNEDNGGVF) is disordered. One can recognise a PPM-type phosphatase domain in the interval 2 to 242 (HAEFRTDRGR…DNITVLLVER (241 aa)). Residues Asp-36, Gly-37, Asp-194, and Asp-233 each coordinate Mn(2+).

It belongs to the PP2C family. It depends on Mn(2+) as a cofactor.

It localises to the cytoplasm. It is found in the membrane. It carries out the reaction O-phospho-L-seryl-[protein] + H2O = L-seryl-[protein] + phosphate. The enzyme catalyses O-phospho-L-threonyl-[protein] + H2O = L-threonyl-[protein] + phosphate. Activity not affected by inhibitors of phosphatases of the PPP family such as okadaic acid and cypermethrin, or by inhibitors of phosphatases of the PTP family such as sodium orthovanadate. Protein phosphatase that dephosphorylates EF-Tu. This chain is Serine/threonine phosphatase stp (stp), found in Listeria monocytogenes serovar 1/2a (strain ATCC BAA-679 / EGD-e).